Reading from the N-terminus, the 804-residue chain is Phenylalanine--tRNA ligase beta subunit (804 aa).

The tRNA-binding domain maps to 40-155 (GEGIKGVVIG…GDAETGADAL (116 aa)). Positions 409 to 484 (IKENVIRLSV…RLYGYDNIPS (76 aa)) constitute a B5 domain. Residues Asp-462, Asp-468, Glu-471, and Glu-472 each coordinate Mg(2+). The FDX-ACB domain occupies 710–803 (PKYPSVTRDI…LEDKYQAVLR (94 aa)).

It belongs to the phenylalanyl-tRNA synthetase beta subunit family. Type 1 subfamily. Tetramer of two alpha and two beta subunits. Requires Mg(2+) as cofactor.

It localises to the cytoplasm. It carries out the reaction tRNA(Phe) + L-phenylalanine + ATP = L-phenylalanyl-tRNA(Phe) + AMP + diphosphate + H(+). This Bacillus licheniformis (strain ATCC 14580 / DSM 13 / JCM 2505 / CCUG 7422 / NBRC 12200 / NCIMB 9375 / NCTC 10341 / NRRL NRS-1264 / Gibson 46) protein is Phenylalanine--tRNA ligase beta subunit.